A 670-amino-acid chain; its full sequence is DNA ligase (670 aa).

NAD(+)-binding positions include 33–37 (DAEYD), 82–83 (SL), and E114. Residue K116 is the N6-AMP-lysine intermediate of the active site. NAD(+) contacts are provided by R137, E174, K291, and K315. 4 residues coordinate Zn(2+): C409, C412, C427, and C433. The BRCT domain occupies 593–670 (GVELPLEGKT…TEQDLLNLMK (78 aa)).

The protein belongs to the NAD-dependent DNA ligase family. LigA subfamily. It depends on Mg(2+) as a cofactor. The cofactor is Mn(2+).

It catalyses the reaction NAD(+) + (deoxyribonucleotide)n-3'-hydroxyl + 5'-phospho-(deoxyribonucleotide)m = (deoxyribonucleotide)n+m + AMP + beta-nicotinamide D-nucleotide.. Its function is as follows. DNA ligase that catalyzes the formation of phosphodiester linkages between 5'-phosphoryl and 3'-hydroxyl groups in double-stranded DNA using NAD as a coenzyme and as the energy source for the reaction. It is essential for DNA replication and repair of damaged DNA. This chain is DNA ligase, found in Vibrio campbellii (strain ATCC BAA-1116).